The chain runs to 129 residues: Transcription antitermination protein NusB (129 aa).

The protein belongs to the NusB family.

Its function is as follows. Involved in transcription antitermination. Required for transcription of ribosomal RNA (rRNA) genes. Binds specifically to the boxA antiterminator sequence of the ribosomal RNA (rrn) operons. In Bacillus licheniformis (strain ATCC 14580 / DSM 13 / JCM 2505 / CCUG 7422 / NBRC 12200 / NCIMB 9375 / NCTC 10341 / NRRL NRS-1264 / Gibson 46), this protein is Transcription antitermination protein NusB.